Consider the following 621-residue polypeptide: Cryptochrome-1 (621 aa).

The region spanning 3–132 (VNAVHWFRKG…EVIVRISHTL (130 aa)) is the Photolyase/cryptochrome alpha/beta domain. 3 short sequence motifs (LIR) span residues 50-54 (NRWRF), 82-87 (DVFPRL), and 151-156 (KRFQTL). S252 contacts FAD. 4 short sequence motifs (LIR) span residues 255–260 (LRFGCL), 271–276 (DLYKKV), 285–290 (SLYGQL), and 335–339 (TGFPW). Q289 contacts FAD. H355 contacts FAD. The LIR 8 signature appears at 379 to 384 (KVFEEL). An FAD-binding site is contributed by 387 to 389 (DAD). 5 consecutive short sequence motifs (LIR) follow at residues 395–400 (GSWMWL), 411–416 (HCYCPV), 430–435 (RRYLPV), 486–491 (QIYQQL), and 492–497 (SRYRGL). The interval 581 to 621 (QSHLMQPGRASLGTGISAGKRPNPEEETQSVGPKVQRQSTN) is disordered.

This sequence belongs to the DNA photolyase class-1 family. Component of the circadian core oscillator, which includes the CRY proteins, CLOCK or NPAS2, BMAL1 or BMAL2, CSNK1E, and the PER proteins. FAD serves as cofactor. The cofactor is (6R)-5,10-methylene-5,6,7,8-tetrahydrofolate. Expressed in the pineal gland.

The protein localises to the cytoplasm. Its subcellular location is the nucleus. Transcriptional repressor which forms a core component of the circadian clock. The circadian clock, an internal time-keeping system, regulates various physiological processes through the generation of approximately 24 hour circadian rhythms in gene expression, which are translated into rhythms in metabolism and behavior. It is derived from the Latin roots 'circa' (about) and 'diem' (day) and acts as an important regulator of a wide array of physiological functions including metabolism, sleep, body temperature, blood pressure, endocrine, immune, cardiovascular, and renal function. Consists of two major components: the central clock, residing in the suprachiasmatic nucleus (SCN) of the brain, and the peripheral clocks that are present in nearly every tissue and organ system. Both the central and peripheral clocks can be reset by environmental cues, also known as Zeitgebers (German for 'timegivers'). The predominant Zeitgeber for the central clock is light, which is sensed by retina and signals directly to the SCN. The central clock entrains the peripheral clocks through neuronal and hormonal signals, body temperature and feeding-related cues, aligning all clocks with the external light/dark cycle. Circadian rhythms allow an organism to achieve temporal homeostasis with its environment at the molecular level by regulating gene expression to create a peak of protein expression once every 24 hours to control when a particular physiological process is most active with respect to the solar day. Transcription and translation of core clock components (CLOCK, NPAS2, BMAL1, BMAL2, PER1, PER2, PER3, CRY1 and CRY2) plays a critical role in rhythm generation, whereas delays imposed by post-translational modifications (PTMs) are important for determining the period (tau) of the rhythms (tau refers to the period of a rhythm and is the length, in time, of one complete cycle). A diurnal rhythm is synchronized with the day/night cycle, while the ultradian and infradian rhythms have a period shorter and longer than 24 hours, respectively. Disruptions in the circadian rhythms contribute to the pathology of cardiovascular diseases, cancer, metabolic syndromes and aging. A transcription/translation feedback loop (TTFL) forms the core of the molecular circadian clock mechanism. Transcription factors, CLOCK or NPAS2 and BMAL1 or BMAL2, form the positive limb of the feedback loop, act in the form of a heterodimer and activate the transcription of core clock genes and clock-controlled genes (involved in key metabolic processes), harboring E-box elements (5'-CACGTG-3') within their promoters. The core clock genes: PER1/2/3 and CRY1/2 which are transcriptional repressors form the negative limb of the feedback loop and interact with the CLOCK|NPAS2-BMAL1|BMAL2 heterodimer inhibiting its activity and thereby negatively regulating their own expression. This heterodimer also activates nuclear receptors NR1D1/2 and RORA/B/G, which form a second feedback loop and which activate and repress BMAL1 transcription, respectively. CRY1 and CRY2 have redundant functions but also differential and selective contributions at least in defining the pace of the SCN circadian clock and its circadian transcriptional outputs. More potent transcriptional repressor in cerebellum and liver than CRY2, though more effective in lengthening the period of the SCN oscillator. On its side, CRY2 seems to play a critical role in tuning SCN circadian period by opposing the action of CRY1. With CRY2, is dispensable for circadian rhythm generation but necessary for the development of intercellular networks for rhythm synchrony. Capable of translocating circadian clock core proteins such as PER proteins to the nucleus. Interacts with CLOCK-BMAL1 independently of PER proteins and is found at CLOCK-BMAL1-bound sites, suggesting that CRY may act as a molecular gatekeeper to maintain CLOCK-BMAL1 in a poised and repressed state until the proper time for transcriptional activation. Represses CLOCK-BMAL1-mediated transcriptional activation. In Gallus gallus (Chicken), this protein is Cryptochrome-1 (CRY1).